The following is a 280-amino-acid chain: F420-dependent methylenetetrahydromethanopterin dehydrogenase (280 aa).

The protein belongs to the MTD family.

It carries out the reaction 5,10-methylenetetrahydromethanopterin + oxidized coenzyme F420-(gamma-L-Glu)(n) + 2 H(+) = 5,10-methenyl-5,6,7,8-tetrahydromethanopterin + reduced coenzyme F420-(gamma-L-Glu)(n). It participates in one-carbon metabolism; methanogenesis from CO(2); 5,10-methylene-5,6,7,8-tetrahydromethanopterin from 5,10-methenyl-5,6,7,8-tetrahydromethanopterin (coenzyme F420 route): step 1/1. Functionally, catalyzes the reversible reduction of methenyl-H(4)MPT(+) to methylene-H(4)MPT. In Methanospirillum hungatei JF-1 (strain ATCC 27890 / DSM 864 / NBRC 100397 / JF-1), this protein is F420-dependent methylenetetrahydromethanopterin dehydrogenase.